Consider the following 298-residue polypeptide: Heterogeneous nuclear ribonucleoprotein C (298 aa).

Ala-2 carries the post-translational modification N-acetylalanine. Residues Lys-8, Lys-50, Lys-89, and Lys-94 each participate in a glycyl lysine isopeptide (Lys-Gly) (interchain with G-Cter in SUMO2) cross-link. The 72-residue stretch at 16–87 (SRVFIGNLNT…QVLDINLAAE (72 aa)) folds into the RRM domain. A Phosphoserine modification is found at Ser-108. 2 disordered regions span residues 131-177 (PPPP…VKGD) and 204-298 (EKEQ…EDDS). The short motif at 142–148 (PSKRQRV) is the Nuclear localization signal element. Phosphoserine occurs at positions 149 and 153. Positions 162 to 173 (SKSGQRGSSSKS) are enriched in low complexity. Residue Lys-163 is modified to N6-acetyllysine; alternate. Residue Lys-163 forms a Glycyl lysine isopeptide (Lys-Gly) (interchain with G-Cter in SUMO2); alternate linkage. The stretch at 176–211 (GDDLQAIKKELTQIKQKVDSLLESLEKIEKEQSKQA) forms a coiled coil. Lys-209 is covalently cross-linked (Glycyl lysine isopeptide (Lys-Gly) (interchain with G-Cter in SUMO2)). Residues Ser-214, Ser-216, and Ser-217 each carry the phosphoserine modification. Lys-222 participates in a covalent cross-link: Glycyl lysine isopeptide (Lys-Gly) (interchain with G-Cter in SUMO2). Lys-225 is covalently cross-linked (Glycyl lysine isopeptide (Lys-Gly) (interchain with G-Cter in SUMO2); alternate). A Glycyl lysine isopeptide (Lys-Gly) (interchain with G-Cter in SUMO1); alternate cross-link involves residue Lys-225. 4 positions are modified to phosphoserine: Ser-226, Ser-231, Ser-232, and Ser-234. The span at 235 to 246 (VKKDETNVKMES) shows a compositional bias: basic and acidic residues. Glycyl lysine isopeptide (Lys-Gly) (interchain with G-Cter in SUMO2) cross-links involve residues Lys-236 and Lys-237. A Glycyl lysine isopeptide (Lys-Gly) (interchain with G-Cter in SUMO2); alternate cross-link involves residue Lys-243. A Glycyl lysine isopeptide (Lys-Gly) (interchain with G-Cter in SUMO); alternate cross-link involves residue Lys-243. Ser-246 and Ser-253 each carry phosphoserine. The segment covering 248-269 (AGADDSAEEGDLLDDDDNEDRG) has biased composition (acidic residues). A compositionally biased stretch (basic and acidic residues) spans 270-279 (DDQLELKDDE). Residues 280–298 (KEPEEGEDDRDSANGEDDS) are compositionally biased toward acidic residues. Phosphoserine is present on residues Ser-291 and Ser-298.

This sequence belongs to the RRM HNRPC family. RALY subfamily. Tetramer composed of 3 copies of isoform C1 and 1 copy of isoform C2. Assembly of 3 tetramers with bound pre-mRNA gives rise to a 19S complex that interacts with HNRNPA2B1 tetramers. Component of the 40S hnRNP particle. Identified in the spliceosome C complex. Interacts with IGF2BP1. Interacts with PPIA/CYPA. Phosphorylated on Ser-253 and Ser-291 in resting cells. Post-translationally, sumoylated. Sumoylation reduces affinity for mRNA. In terms of processing, ubiquitinated and degraded after nucleo-cytoplasmic transport by YWHAE.

The protein resides in the nucleus. In terms of biological role, binds pre-mRNA and nucleates the assembly of 40S hnRNP particles. Interacts with poly-U tracts in the 3'-UTR or 5'-UTR of mRNA and modulates the stability and the level of translation of bound mRNA molecules. Single HNRNPC tetramers bind 230-240 nucleotides. Trimers of HNRNPC tetramers bind 700 nucleotides. May play a role in the early steps of spliceosome assembly and pre-mRNA splicing. N6-methyladenosine (m6A) has been shown to alter the local structure in mRNAs and long non-coding RNAs (lncRNAs) via a mechanism named 'm(6)A-switch', facilitating binding of HNRNPC, leading to regulation of mRNA splicing. This chain is Heterogeneous nuclear ribonucleoprotein C, found in Rattus norvegicus (Rat).